Here is a 374-residue protein sequence, read N- to C-terminus: Cyclin-D (374 aa).

The protein belongs to the cyclin family. Cyclin D subfamily.

The protein is Cyclin-D (CycD) of Ostreococcus tauri.